The primary structure comprises 380 residues: Alcohol dehydrogenase-like 4 (380 aa).

Residues Cys47, Thr49, His70, Cys100, Cys103, Cys106, Cys114, and Cys180 each contribute to the Zn(2+) site. Residues Thr49 and His70 each coordinate an alcohol. Thr49 contacts NAD(+). Residues 205 to 210 (GLGAVG), Asp229, Lys234, 298 to 300 (LGV), Phe325, and Arg375 contribute to the NAD(+) site.

It belongs to the zinc-containing alcohol dehydrogenase family. Class-III subfamily. As to quaternary structure, homodimer. The cofactor is Zn(2+).

The protein resides in the cytoplasm. The catalysed reaction is a primary alcohol + NAD(+) = an aldehyde + NADH + H(+). It carries out the reaction a secondary alcohol + NAD(+) = a ketone + NADH + H(+). The protein is Alcohol dehydrogenase-like 4 of Arabidopsis thaliana (Mouse-ear cress).